Here is an 89-residue protein sequence, read N- to C-terminus: Cornifin-A (89 aa).

The tract at residues 1 to 29 is disordered; it reads MNSQQQKQPCTPPPQPQQQQVKQPCQPPP. A run of 8 repeats spans residues 3–14, 18–29, 31–38, 39–46, 47–54, 55–62, 63–70, and 71–78. Residues 3–29 form a 2 X 12 AA approximate repeats region; the sequence is SQQQKQPCTPPPQPQQQQVKQPCQPPP. The tract at residues 31-78 is 6 X 8 AA approximate tandem repeats; that stretch reads EPCIPKTKEPCHPKVPEPCHPKVPEPCQPKVPEPCQPKVPEPCPSTVT. Positions 68–89 are disordered; sequence KVPEPCPSTVTPAPAQQKTKQK. Over residues 75 to 89 the composition is skewed to polar residues; that stretch reads STVTPAPAQQKTKQK.

It belongs to the cornifin (SPRR) family.

It localises to the cytoplasm. In terms of biological role, cross-linked envelope protein of keratinocytes. It is a keratinocyte protein that first appears in the cell cytosol, but ultimately becomes cross-linked to membrane proteins by transglutaminase. All that results in the formation of an insoluble envelope beneath the plasma membrane. This Homo sapiens (Human) protein is Cornifin-A (SPRR1A).